Reading from the N-terminus, the 342-residue chain is Bifunctional terpene synthase Agr4 (342 aa).

4 residues coordinate Mg(2+): aspartate 87, asparagine 222, serine 226, and glutamate 230. The short motif at 87-91 is the DDXXD motif element; sequence DEVSD. (2E,6E)-farnesyl diphosphate contacts are provided by arginine 308 and tyrosine 309.

Belongs to the terpene synthase family. Mg(2+) serves as cofactor.

It carries out the reaction (2E,6E)-farnesyl diphosphate = delta-cadinene + diphosphate. The enzyme catalyses (2E,6E)-farnesyl diphosphate = gamma-muurolene + diphosphate. The catalysed reaction is (2E,6E)-farnesyl diphosphate = beta-copaene + diphosphate. It catalyses the reaction (2E)-geranyl diphosphate = beta-myrcene + diphosphate. Functionally, terpene cyclase that catalyzes the cyclization of farnesyl diphosphate (FPP) to various sesquiterpenes, including beta-copaene, alpha-cubebene, cadina-1(6),4-diene, gamma-muurolene, delta-cadinene, epizonarene, epicubenol and cubenol. Agr4 is also able to use the monoterpene precursor geranyl diphosphate (GPP) as substrates to synthesize the monoterpene beta-myrcene. Delta-cadinene is the major product of Agr4. The sequence is that of Bifunctional terpene synthase Agr4 from Cyclocybe aegerita (Black poplar mushroom).